Reading from the N-terminus, the 75-residue chain is UPF0352 protein ETA_12580 (75 aa).

This sequence belongs to the UPF0352 family.

The chain is UPF0352 protein ETA_12580 from Erwinia tasmaniensis (strain DSM 17950 / CFBP 7177 / CIP 109463 / NCPPB 4357 / Et1/99).